Consider the following 210-residue polypeptide: Probable GTP-binding protein EngB (210 aa).

The EngB-type G domain maps to 25 to 199; the sequence is TGIEVAFAGR…RQKLDSWFNE (175 aa). Residues 33-40, 60-64, 78-81, 145-148, and 178-180 each bind GTP; these read GRSNAGKS, GRTQL, DLPG, TKAD, and FSS. Mg(2+) contacts are provided by Ser40 and Thr62.

It belongs to the TRAFAC class TrmE-Era-EngA-EngB-Septin-like GTPase superfamily. EngB GTPase family. Requires Mg(2+) as cofactor.

Necessary for normal cell division and for the maintenance of normal septation. The polypeptide is Probable GTP-binding protein EngB (Klebsiella pneumoniae subsp. pneumoniae (strain ATCC 700721 / MGH 78578)).